The following is a 228-amino-acid chain: Ankyrin repeat domain-containing protein 46 (228 aa).

4 ANK repeats span residues 11–40, 44–74, 77–103, and 107–138; these read QTNV…DPNI, RGRT…PLAT, QGNT…KIDI, and QGAT…EVKG. The chain crosses the membrane as a helical span at residues 195-215; the sequence is VLLLILVIALLSLGIAYYVSG.

The protein localises to the membrane. This Rattus norvegicus (Rat) protein is Ankyrin repeat domain-containing protein 46 (Ankrd46).